The following is a 345-amino-acid chain: uncharacterized protein (345 aa).

This sequence belongs to the cycloisomerase 2 family.

This is an uncharacterized protein from Staphylococcus saprophyticus subsp. saprophyticus (strain ATCC 15305 / DSM 20229 / NCIMB 8711 / NCTC 7292 / S-41).